Reading from the N-terminus, the 1499-residue chain is Collagen alpha-2(V) chain (1499 aa).

An N-terminal signal peptide occupies residues 1 to 26 (MMANWAEARPLLILIVLLGQFVSIKA). The 59-residue stretch at 39–97 (IACTQNGQMYLNRDIWKPAPCQICVCDNGAILCDKIECQDVLDCADPVTPPGECCPVCS) folds into the VWFC domain. Positions 104 to 1268 (NTNFGRGRKG…DDKNKTDPGV (1165 aa)) are disordered. Residues 170–182 (PGAPGPPGHPSHP) are compositionally biased toward pro residues. The span at 212-227 (PGSVGPVGPRGPQGLQ) shows a compositional bias: low complexity. Residues 236–248 (TGPPGEPGDPGPM) show a composition bias toward pro residues. Residues Pro-290, Pro-293, and Pro-296 each carry the hydroxyproline modification. Low complexity-rich tracts occupy residues 322 to 340 (EAGP…PRGM) and 427 to 443 (TPGA…SGPP). The Cell attachment site motif lies at 506–508 (RGD). Composition is skewed to low complexity over residues 604 to 626 (SIGI…SGDP) and 694 to 709 (DQGV…PLGP). Residues Pro-611 and Pro-617 each carry the hydroxyproline modification. Over residues 710-721 (RGERGNPGERGE) the composition is skewed to basic and acidic residues. Residues 732-741 (GMAGGHGPDG) are compositionally biased toward gly residues. Over residues 742-758 (PKGSPGPSGTPGDTGPP) the composition is skewed to low complexity. The span at 776-787 (KGDRGGIGEKGA) shows a compositional bias: basic and acidic residues. Positions 826 to 841 (PPGSRGNPGSRGENGP) are enriched in low complexity. Gly residues predominate over residues 894–903 (GLKGGRGTQG). The residue at position 919 (Pro-919) is a 3-hydroxyproline; partial. A compositionally biased stretch (pro residues) spans 919-929 (PPGPAGAPGPA). 6 consecutive short sequence motifs (cell attachment site) follow at residues 944–946 (RGD), 1067–1069 (RGD), 1070–1072 (RGD), 1100–1102 (RGD), 1127–1129 (RGD), and 1136–1138 (RGD). Positions 1063–1072 (AVGERGDRGD) are enriched in basic and acidic residues. Over residues 1093–1114 (APGDAGQRGDPGSRGPIGPPGR) the composition is skewed to low complexity. A compositionally biased stretch (basic and acidic residues) spans 1127-1141 (RGDKGDHGDRGDRGQ). Pro-1156 is subject to 3-hydroxyproline; partial. Pro residues-rich tracts occupy residues 1171–1181 (PFGPRGPPGPV) and 1211–1226 (EGPP…PGPP). Residues 1230–1499 (TAALGDIMGH…GVEIGPVCFV (270 aa)) constitute a propeptide, C-terminal propeptide. Asn-1262 carries an N-linked (GlcNAc...) asparagine glycan. Positions 1266–1499 (PGVHATLKSL…GVEIGPVCFV (234 aa)) constitute a Fibrillar collagen NC1 domain. 3 cysteine pairs are disulfide-bonded: Cys-1296/Cys-1328, Cys-1336/Cys-1497, and Cys-1405/Cys-1450. The Ca(2+) site is built by Asp-1314, Asn-1316, Gln-1317, and Asp-1322. Asn-1400 carries an N-linked (GlcNAc...) asparagine glycan.

It belongs to the fibrillar collagen family. Trimers of two alpha 1(V) and one alpha 2(V) chains in most tissues and trimers of one alpha 1(V), one alpha 2(V), and one alpha 3(V) chains in placenta. In terms of processing, prolines at the third position of the tripeptide repeating unit (G-X-P) are hydroxylated in some or all of the chains. Probably 3-hydroxylated on Pro-919 and Pro-1156 by LEPREL1.

Its subcellular location is the secreted. The protein localises to the extracellular space. It is found in the extracellular matrix. Type V collagen is a member of group I collagen (fibrillar forming collagen). It is a minor connective tissue component of nearly ubiquitous distribution. Type V collagen binds to DNA, heparan sulfate, thrombospondin, heparin, and insulin. Type V collagen is a key determinant in the assembly of tissue-specific matrices. The chain is Collagen alpha-2(V) chain (COL5A2) from Homo sapiens (Human).